We begin with the raw amino-acid sequence, 418 residues long: Phosphoglycerate kinase (418 aa).

Substrate contacts are provided by residues 18–20, Arg-34, 57–60, Arg-115, and Arg-171; these read DFN and HLGR. ATP is bound by residues Lys-224, Gly-315, Glu-346, and 375 to 378; that span reads GGDS.

It belongs to the phosphoglycerate kinase family. Monomer.

It localises to the cytoplasm. The catalysed reaction is (2R)-3-phosphoglycerate + ATP = (2R)-3-phospho-glyceroyl phosphate + ADP. The protein operates within carbohydrate degradation; glycolysis; pyruvate from D-glyceraldehyde 3-phosphate: step 2/5. The chain is Phosphoglycerate kinase from Porphyromonas gingivalis (strain ATCC BAA-308 / W83).